A 404-amino-acid polypeptide reads, in one-letter code: Spore development regulator RYP2 (404 aa).

3 disordered regions span residues 1-46 (MSAP…RKAV), 200-231 (LLKR…SSQQ), and 382-404 (SGQS…PAWG). The 178-residue stretch at 17–194 (LQSADFRLTV…ADQGVKLRIR (178 aa)) folds into the Velvet domain. Residues 29 to 46 (NPERARVAGGKEKERKAV) show a composition bias toward basic and acidic residues. The segment covering 382–397 (SGQSFSQSAGHMQSPS) has biased composition (polar residues).

The protein belongs to the velvet family. VosA subfamily. Forms a heterodimeric complex with RYP3; the formation of the RYP2-RYP3 complex is light-dependent.

The protein resides in the nucleus. Component of the RYP2-RYP3 heterodimeric complex that plays a dual role in activating genes associated with spore maturation and repressing certain development-associated genes. The complex binds DNA through the DNA-binding domain of vosA that recognizes an 11-nucleotide consensus sequence 5'-CTGGCCGCGGC-3' consisting of two motifs in the promoters of key developmental regulatory genes. Required for viable spore production and regulation of sporulation in response to temperature and for the switch to yeast-form in the presence of host cells. The protein is Spore development regulator RYP2 of Ajellomyces capsulatus (Darling's disease fungus).